The sequence spans 271 residues: MSRELIRTADAWNKVKIARDPNRPNAKFYINEIFDEFIELHGDRNFGDDKAIIGGIALLNNLSFTVVGICKGENTKENIKRNFGMPHPEGYRKALRLMKQAEKFKRPVICFVDTPGAFCGIGAEERGQGQAIAQNLVELMGLKVPLISIVIGEGGSGGALALAVADKVFMLEHSIYSVLSPEGFASILWKDSSRAEEAASVMKITAQDLKSFNIIDKIIKEPRGGAHKNPIKMAQNIKKTILEALGEMKGTDLDTLLNERYNKYRNIENNL.

In terms of domain architecture, CoA carboxyltransferase C-terminal spans 1–247 (MSRELIRTAD…KKTILEALGE (247 aa)).

This sequence belongs to the AccA family. Acetyl-CoA carboxylase is a heterohexamer composed of biotin carboxyl carrier protein (AccB), biotin carboxylase (AccC) and two subunits each of ACCase subunit alpha (AccA) and ACCase subunit beta (AccD).

It localises to the cytoplasm. It carries out the reaction N(6)-carboxybiotinyl-L-lysyl-[protein] + acetyl-CoA = N(6)-biotinyl-L-lysyl-[protein] + malonyl-CoA. It functions in the pathway lipid metabolism; malonyl-CoA biosynthesis; malonyl-CoA from acetyl-CoA: step 1/1. Its function is as follows. Component of the acetyl coenzyme A carboxylase (ACC) complex. First, biotin carboxylase catalyzes the carboxylation of biotin on its carrier protein (BCCP) and then the CO(2) group is transferred by the carboxyltransferase to acetyl-CoA to form malonyl-CoA. This is Acetyl-coenzyme A carboxylase carboxyl transferase subunit alpha from Clostridium perfringens (strain 13 / Type A).